Here is a 179-residue protein sequence, read N- to C-terminus: MSRIGKLPIKIPANVDITCSGPDLTVKGKFGTLHNTIPDAIGIEEIDGSLIVNVKDNTRSNRALHGLYRTLINNMVTGVSEQFQLTLNLQGVGYRASVQGNSIILNLGYSHPVELVIPEGISVEVVQNTTINLKACDKGNLGLFASNIRSWRPPEPYKGKGILYKGEIVKRKAGKSGKK.

The protein belongs to the universal ribosomal protein uL6 family. Part of the 50S ribosomal subunit.

Its subcellular location is the plastid. The protein resides in the chloroplast. Binds 23S rRNA. This is Large ribosomal subunit protein uL6c (rpl6) from Trieres chinensis (Marine centric diatom).